A 471-amino-acid polypeptide reads, in one-letter code: (13S,14R)-1,13-dihydroxy-N-methylcanadine 13-O-acetyltransferase AT1 (471 aa).

This sequence belongs to the plant acyltransferase family.

It catalyses the reaction (13S,14R)-1,13-dihydroxy-N-methylcanadine + acetyl-CoA = (13S,14R)-13-O-acetyl-1-hydroxy-N-methylcanadine + CoA. Its pathway is alkaloid biosynthesis. Its function is as follows. Acetyltransferase involved in the biosynthesis of the benzylisoquinoline alkaloid noscapine. Converts (13S,14R)-1,13-dihydroxy-N-methylcanadine to (13S,14R)-13-O-acetyl-1-hydroxy-N-methylcanadine. The polypeptide is (13S,14R)-1,13-dihydroxy-N-methylcanadine 13-O-acetyltransferase AT1 (Papaver somniferum (Opium poppy)).